A 757-amino-acid chain; its full sequence is MDVNPTLLFLKVPAQNAISTTFPYTGDPPYSHGTGTGYTMDTVNRTHQYSEKGKWTTNTETGAPQLNPIDGPLPEDNEPSGYAQTDCVLEAMAFLEESHPGIFENSCLETMEVVQQTRVDKLTQGRQTYDWTLKRNQPAATALANTIEVFRSNGLTANESGRLIDFLKDVMESMDKGEMEIITHFQRKRRVRDNMTKKMVTQRTIGKKKQRLNKRSYLIRALTLNTMTKDAERGKLKRRAIATPGMQIRGFVYFVETLARSICEKLEQSGLPVGGNEKKAKLANVVRKMMTNSQDTELSFTITGDNTKWNENQNPRMFLAMITYITRNQPEWFRNVLSIAPIMFSNKMARLGKGYMFESKSMKLRTQIPAEMLASIDLKYFNESTRKKIEKIRPLLIDGTASLSPGMMMGMFNMLSTVLGVSILNLGQKRYTKTTYWWDGLQSSDDFALIVNAPNHEGIEAGVDRFYRTCKLVGINMTKKKSYINRTGTCEFTSFFYRYGFVANFSMELPSFGVSGINESADMSIGVTVIKNNMMDNDLGPATAQMALQLFIKDYRYPYRCHRGDTQIQTRRSFELKKLWEQTRSKAGLLVSDGGPNPYNIRNLHIPEAGLKWELMDEDYQGRLCNPLNPFVSHKEIESVNNAVVMPAHGPAKSMEYDAVATTHSWIPKRNRSILNTSQRGILEDEQMYQKCCNLFEKFFPSSSYRRPVGISSMVEAMVSRARIDARIDFESGRIKKEEFAEIMKICSTIEELGRQK.

Residues 50–82 (SEKGKWTTNTETGAPQLNPIDGPLPEDNEPSGY) form a disordered region. Positions 55–64 (WTTNTETGAP) are enriched in polar residues. 2 consecutive short sequence motifs (nuclear localization signal) follow at residues 187 to 195 (RKRRVRDNM) and 203 to 216 (RTIG…NKRS). The interval 249–256 (RGFVYFVE) is promoter-binding site. Positions 286–483 (VRKMMTNSQD…GINMTKKKSY (198 aa)) constitute a RdRp catalytic domain.

The protein belongs to the influenza viruses polymerase PB1 family. Influenza RNA polymerase is composed of three subunits: PB1, PB2 and PA. Interacts (via N-terminus) with PA (via C-terminus). Interacts (via C-terminus) with PB2 (via N-terminus); this interaction is essential for transcription initiation. Phosphorylated by host PRKCA.

It localises to the host nucleus. Its subcellular location is the host cytoplasm. It carries out the reaction RNA(n) + a ribonucleoside 5'-triphosphate = RNA(n+1) + diphosphate. Functionally, RNA-dependent RNA polymerase which is responsible for replication and transcription of virus RNA segments. The transcription of viral mRNAs occurs by a unique mechanism called cap-snatching. 5' methylated caps of cellular mRNAs are cleaved after 10-13 nucleotides by PA. In turn, these short capped RNAs are used as primers by PB1 for transcription of viral mRNAs. During virus replication, PB1 initiates RNA synthesis and copy vRNA into complementary RNA (cRNA) which in turn serves as a template for the production of more vRNAs. The protein is RNA-directed RNA polymerase catalytic subunit of Aves (Cat).